The primary structure comprises 564 residues: NAD-dependent malic enzyme (564 aa).

The Proton donor role is filled by tyrosine 102. Arginine 155 contacts NAD(+). Lysine 173 acts as the Proton acceptor in catalysis. A divalent metal cation-binding residues include glutamate 244, aspartate 245, and aspartate 268. Aspartate 268 and asparagine 417 together coordinate NAD(+).

It belongs to the malic enzymes family. Homotetramer. It depends on Mg(2+) as a cofactor. Mn(2+) serves as cofactor.

The catalysed reaction is (S)-malate + NAD(+) = pyruvate + CO2 + NADH. It catalyses the reaction oxaloacetate + H(+) = pyruvate + CO2. The sequence is that of NAD-dependent malic enzyme from Pseudomonas aeruginosa (strain LESB58).